The sequence spans 123 residues: Large ribosomal subunit protein bL12 (123 aa).

It belongs to the bacterial ribosomal protein bL12 family. Homodimer. Part of the ribosomal stalk of the 50S ribosomal subunit. Forms a multimeric L10(L12)X complex, where L10 forms an elongated spine to which 2 to 4 L12 dimers bind in a sequential fashion. Binds GTP-bound translation factors.

Forms part of the ribosomal stalk which helps the ribosome interact with GTP-bound translation factors. Is thus essential for accurate translation. In Borrelia turicatae (strain 91E135), this protein is Large ribosomal subunit protein bL12.